A 212-amino-acid chain; its full sequence is MTLQYTALGDSLTVGVGAGLFEPGFVQRYKRKMEEDLNEEVSLIVFAKSGLETSEILAMLNEPFIMEQVKKADVITITGCGNDLLQSLEIYEKEKDEHVFLEASSHCQKNYSGMLEKIREIKGEKDTRYLVRLLNLYNPFPSIELADKWISGFNRHLKQLESAPQIKVIDTYAVFKGREKEYLSIDRVHPSSRGYEAMSEKLRAAGYGRLEG.

The Nucleophile role is filled by S11. Residues G50 and N82 each contribute to the substrate site. Catalysis depends on residues D186 and H189.

It belongs to the 'GDSL' lipolytic enzyme family.

It is found in the spore coat. Its function is as follows. Lipase involved in spore germination. The chain is Spore germination lipase LipC (lipC) from Bacillus licheniformis (strain ATCC 14580 / DSM 13 / JCM 2505 / CCUG 7422 / NBRC 12200 / NCIMB 9375 / NCTC 10341 / NRRL NRS-1264 / Gibson 46).